A 382-amino-acid chain; its full sequence is Palmitoyltransferase ZDHHC16B (382 aa).

The Cytoplasmic segment spans residues 1 to 75; the sequence is MRSWRWSVSR…IYWLVDNMTR (75 aa). The helical transmembrane segment at 76 to 96 threads the bilayer; it reads WFGVVFVCLVMALTSSVVVIV. Over 97-107 the chain is Lumenal; that stretch reads YLCVLPIIFSS. Residues 108–130 form a helical membrane-spanning segment; that stretch reads YPVYWILWHLCYGHWNLLMVVFH. The Cytoplasmic segment spans residues 131 to 196; sequence YYKATTTQPG…NNCVGHFNHR (66 aa). The 51-residue stretch at 153–203 folds into the DHHC domain; the sequence is TICKKCIVPKPARTHHCSICNRCILKMDHHCPWLNNCVGHFNHRYFFSFCL. Residue Cys183 is the S-palmitoyl cysteine intermediate of the active site. A helical membrane pass occupies residues 197–217; the sequence is YFFSFCLFMTMGCVYCSISAK. At 218 to 275 the chain is on the lumenal side; sequence DMFLDAYNAIESGRYKGGASQGEAVPGAGLIYISFQHQSSYQTPPPAFTHQERMVHKS. Residues 276-296 form a helical membrane-spanning segment; the sequence is LVYLWVLTSSVAVALGALTLW. The Cytoplasmic portion of the chain corresponds to 297–382; the sequence is HAILITRGET…PAYKSSTTAI (86 aa).

It belongs to the DHHC palmitoyltransferase family.

It is found in the endoplasmic reticulum membrane. It carries out the reaction L-cysteinyl-[protein] + hexadecanoyl-CoA = S-hexadecanoyl-L-cysteinyl-[protein] + CoA. In terms of biological role, palmitoyl acyltransferase that mediates palmitoylation of proteins and is required during embryonic heart development. Involved in the proliferation of neural stem cells by regulating the FGF/ERK pathway. In Danio rerio (Zebrafish), this protein is Palmitoyltransferase ZDHHC16B.